The chain runs to 417 residues: Equilibrative nucleotide transporter 2 (417 aa).

11 consecutive transmembrane segments (helical) span residues 20-40, 52-72, 85-105, 109-129, 144-164, 185-205, 265-285, 292-312, 328-348, 354-374, and 393-413; these read AVCW…LTIV, PSRI…SVLV, LFGY…NLAT, GGIG…LADA, PEFL…TSGL, LFFA…AYVF, LAVT…GFLS, SLGD…DLVG, CLLI…ITGI, WMIF…VCVI, and LVLY…LWLV.

It belongs to the SLC29A/ENT transporter (TC 2.A.57) family. Expressed in leaves and flowers.

It localises to the cell membrane. Its function is as follows. May be involved in nucleoside transport. The protein is Equilibrative nucleotide transporter 2 (ENT2) of Arabidopsis thaliana (Mouse-ear cress).